We begin with the raw amino-acid sequence, 372 residues long: uncharacterized protein (372 aa).

The 233-residue stretch at 38-270 (FFIEGGGTKG…ANNIPLDYLI (233 aa)) folds into the PNPLA domain. A GXGXXG motif is present at residues 42–47 (GGGTKG). The GXSXG motif lies at 74-78 (GTSVG). Serine 76 acts as the Nucleophile in catalysis. Aspartate 257 acts as the Proton acceptor in catalysis. The short motif at 257-259 (DGG) is the DGA/G element.

Functionally, probable lipid hydrolase. This is an uncharacterized protein from Acanthamoeba polyphaga (Amoeba).